The primary structure comprises 238 residues: 2-C-methyl-D-erythritol 4-phosphate cytidylyltransferase (238 aa).

Belongs to the IspD/TarI cytidylyltransferase family. IspD subfamily.

It carries out the reaction 2-C-methyl-D-erythritol 4-phosphate + CTP + H(+) = 4-CDP-2-C-methyl-D-erythritol + diphosphate. The protein operates within isoprenoid biosynthesis; isopentenyl diphosphate biosynthesis via DXP pathway; isopentenyl diphosphate from 1-deoxy-D-xylulose 5-phosphate: step 2/6. Catalyzes the formation of 4-diphosphocytidyl-2-C-methyl-D-erythritol from CTP and 2-C-methyl-D-erythritol 4-phosphate (MEP). The sequence is that of 2-C-methyl-D-erythritol 4-phosphate cytidylyltransferase from Alteromonas mediterranea (strain DSM 17117 / CIP 110805 / LMG 28347 / Deep ecotype).